Here is a 265-residue protein sequence, read N- to C-terminus: 2-amino-3,7-dideoxy-D-threo-hept-6-ulosonate synthase (265 aa).

The active-site Proton acceptor is Asp-25. Residues Asp-25–Thr-29 and Tyr-144–Arg-146 each bind 1-deoxy-D-threo-hexo-2,5-diulose 6-phosphate. The active-site Proton donor is Tyr-144. The active-site Schiff-base intermediate with substrate is Lys-174. 1-deoxy-D-threo-hexo-2,5-diulose 6-phosphate-binding positions include Gly-199 to Gly-200 and Gly-226 to Arg-227.

It belongs to the DeoC/FbaB aldolase family. ADHS subfamily. Homodecamer.

It carries out the reaction 1-deoxy-D-threo-hexo-2,5-diulose 6-phosphate + L-aspartate 4-semialdehyde = 2,3-dioxopropyl phosphate + 2-amino-2,3,7-trideoxy-D-lyxo-hept-6-ulosonate. Catalyzes a transaldol reaction between 6-deoxy-5-ketofructose 1-phosphate (DKFP) and L-aspartate semialdehyde (ASA) with an elimination of hydroxypyruvaldehyde phosphate to yield 2-amino-3,7-dideoxy-D-threo-hept-6-ulosonate (ADH). Plays a key role in an alternative pathway of the biosynthesis of 3-dehydroquinate (DHQ), which is involved in the canonical pathway for the biosynthesis of aromatic amino acids. This chain is 2-amino-3,7-dideoxy-D-threo-hept-6-ulosonate synthase, found in Halobacterium salinarum (strain ATCC 700922 / JCM 11081 / NRC-1) (Halobacterium halobium).